The sequence spans 259 residues: Ribonuclease T2-B (259 aa).

A signal peptide spans 1–29; the sequence is MAPAEARGALPGWISVLGWGLALCSLCGA. A disulfide bridge connects residues Cys53 and Cys59. His69 is an active-site residue. Intrachain disulfides connect Cys79–Cys125, Cys188–Cys244, and Cys206–Cys217. Residues Asn80 and Asn110 are each glycosylated (N-linked (GlcNAc...) asparagine). Catalysis depends on residues Glu118 and His122. Residue Asn216 is glycosylated (N-linked (GlcNAc...) asparagine).

It belongs to the RNase T2 family.

The protein resides in the secreted. The protein localises to the lysosome lumen. It localises to the endoplasmic reticulum lumen. Its subcellular location is the mitochondrion intermembrane space. It catalyses the reaction a ribonucleotidyl-ribonucleotide-RNA + H2O = a 3'-end 3'-phospho-ribonucleotide-RNA + a 5'-end dephospho-ribonucleoside-RNA + H(+). It carries out the reaction an adenylyl-uridine-RNA = a 3'-end 2',3'-cyclophospho-AMP-RNA + a 5'-end dephospho-uridine-RNA. The enzyme catalyses a guanylyl-uridine-RNA = a 3'-end 2',3'-cyclophospho-GMP-RNA + a 5'-end dephospho-uridine-RNA. Its activity is regulated as follows. Inhibited by Zn(2+) and Cu(2+). In terms of biological role, ribonuclease that plays an essential role in innate immune response by recognizing and degrading RNAs from microbial pathogens that are subsequently sensed by TLR8. Cleaves preferentially single-stranded RNA molecules between purine and uridine residues, which critically contributes to the supply of catabolic uridine and the generation of purine-2',3'-cyclophosphate-terminated oligoribonucleotides. In turn, RNase T2 degradation products promote the RNA-dependent activation of TLR8. In plasmacytoid dendritic cells, it cooperates with PLD3 or PLD4 5'-&gt;3' exonucleases to process RNA fragments and release 2',3'-cyclic guanosine monophosphate (2',3'-cGMP), a potent stimulatory ligand for TLR7. Also plays a key role in degradation of mitochondrial RNA and processing of non-coding RNA imported from the cytosol into mitochondria. Participates as well in degradation of mitochondrion-associated cytosolic rRNAs. This chain is Ribonuclease T2-B, found in Mus musculus (Mouse).